A 170-amino-acid chain; its full sequence is Acetyl-CoA decarbonylase/synthase complex subunit epsilon 1 (170 aa).

It belongs to the CdhB family. As to quaternary structure, heterotetramer of two alpha and two epsilon subunits. The ACDS complex is made up of alpha, epsilon, beta, gamma and delta subunits with a probable stoichiometry of (alpha(2)epsilon(2))(4)-beta(8)-(gamma(1)delta(1))(8).

The protein operates within one-carbon metabolism; methanogenesis from acetate. Part of a complex that catalyzes the reversible cleavage of acetyl-CoA, allowing growth on acetate as sole source of carbon and energy. The alpha-epsilon subcomponent functions as a carbon monoxide dehydrogenase. The precise role of the epsilon subunit is unclear; it may have a stabilizing role within the alpha(2)epsilon(2) component and/or be involved in electron transfer to FAD during a potential FAD-mediated CO oxidation. The protein is Acetyl-CoA decarbonylase/synthase complex subunit epsilon 1 (cdhB1) of Methanosarcina mazei (strain ATCC BAA-159 / DSM 3647 / Goe1 / Go1 / JCM 11833 / OCM 88) (Methanosarcina frisia).